Consider the following 77-residue polypeptide: UPF0291 protein Bsph_1689 (77 aa).

This sequence belongs to the UPF0291 family.

The protein resides in the cytoplasm. The protein is UPF0291 protein Bsph_1689 of Lysinibacillus sphaericus (strain C3-41).